Here is a 335-residue protein sequence, read N- to C-terminus: Corrinoid adenosyltransferase PduO (335 aa).

Residue H206 coordinates heme.

The protein belongs to the Cob(I)alamin adenosyltransferase family. PduO subfamily. Forms a complex with PduS. Heme b is required as a cofactor. Mg(2+) serves as cofactor.

It is found in the bacterial microcompartment. The catalysed reaction is cob(I)alamin-[corrinoid adenosyltransferase] + ATP = apo-[corrinoid adenosyltransferase] + adenosylcob(III)alamin + triphosphate. It functions in the pathway polyol metabolism; 1,2-propanediol degradation. The protein operates within cofactor biosynthesis; adenosylcobalamin biosynthesis. Its function is as follows. Converts cob(I)alamin to adenosylcobalamin (adenosylcob(III)alamin), the cofactor for propanediol dehydratase. Found in the bacterial microcompartment (BMC) dedicated to 1,2-propanediol (1,2-PD) degradation. PduS and PduO allow regeneration of the adenosylcobalamin cofactor within the BMC. Expression of a cosmid containing the full 21-gene pdu operon in E.coli allows E.coli to grow on 1,2-propanediol (1,2-PD) with the appearance of bacterial microcompartments (BMC) in its cytoplasm. In terms of biological role, the 1,2-PD-specific bacterial microcompartment (BMC) concentrates low levels of 1,2-PD catabolic enzymes, concentrates volatile reaction intermediates thus enhancing pathway flux and keeps the level of toxic, mutagenic propionaldehyde low. This chain is Corrinoid adenosyltransferase PduO, found in Citrobacter freundii.